Here is a 380-residue protein sequence, read N- to C-terminus: MTVGYLRPTRILVDQNAIYENIQNELKHLEGTDTVIFPVLKANAYGHGLIPVAEAAQAAGAAGFCVALLDEALALRRANFTEPILVLGITQPSEIELAAANQISLTVGSLEWLQEATAIAQQVPYLHPVPIHLSIDSGMGRIGMRDEAELLAAYTFIKAHSDYFDFEGVFTHFATADDPDDTYFKEQSARFNQLMTALPERPRFVHVSNSATSLWHAACNGNIIRMGISLYGLNPSGNAIPDLPYPLKQALGIESELVFVKQVAAGTKIGYGATYEASEGEWIGTIPMGYADGWLRRMQGSTVLVDGQRCEIVGRICMDQMMIRLPKRYPVGTKVVFVGKSGDDEITLQEVADYADTIHYEIICDLSDRIPRVYTGLNEH.

Lysine 41 acts as the Proton acceptor; specific for D-alanine in catalysis. Residue lysine 41 is modified to N6-(pyridoxal phosphate)lysine. Arginine 141 is a binding site for substrate. Residue tyrosine 271 is the Proton acceptor; specific for L-alanine of the active site. Methionine 318 lines the substrate pocket.

Belongs to the alanine racemase family. Pyridoxal 5'-phosphate serves as cofactor.

The catalysed reaction is L-alanine = D-alanine. The protein operates within amino-acid biosynthesis; D-alanine biosynthesis; D-alanine from L-alanine: step 1/1. Functionally, catalyzes the interconversion of L-alanine and D-alanine. May also act on other amino acids. The polypeptide is Alanine racemase (alr) (Latilactobacillus sakei subsp. sakei (strain 23K) (Lactobacillus sakei subsp. sakei)).